The chain runs to 197 residues: Class A basic helix-loop-helix protein 15 (197 aa).

The segment covering 1 to 12 has biased composition (basic residues); sequence MKTKNRPPRRRT. Disordered stretches follow at residues 1–82 and 178–197; these read MKTK…ERER and QPQG…REGS. A phosphothreonine mark is found at threonine 12 and threonine 25. Residues 65–82 show a composition bias toward basic and acidic residues; the sequence is GRRENSVQRRLESNERER. The bHLH domain occupies 72 to 124; sequence QRRLESNERERQRMHKLNNAFQALREVIPHVRADKKLSKIETLTLAKNYIKSL.

In terms of assembly, forms homodimers or heterodimers with TCF3 gene products E12 and E47. These dimers bind to the E-box site, however, heterodimer with MYOD1 does not bind target DNA. As to expression, expressed in pancreatic tissue only in acinar cells. There is a complete absence of expression in intra- or interlobular pancreatic ducts and in all islet cells.

The protein localises to the nucleus. Functionally, plays a role in controlling the transcriptional activity of MyoD, ensuring that expanding myoblast populations remain undifferentiated. Repression may occur through muscle-specific E-box occupancy by homodimers. May also negatively regulate bHLH-mediated transcription through an N-terminal repressor domain. Serves as a key regulator of acinar cell function, stability, and identity. Also required for normal organelle localization in exocrine cells and for mitochondrial calcium ion transport. May function as a unique regulator of gene expression in several different embryonic and postnatal cell lineages. Binds to the E-box consensus sequence 5'-CANNTG-3'. The protein is Class A basic helix-loop-helix protein 15 (Bhlha15) of Mus musculus (Mouse).